The primary structure comprises 148 residues: Large ribosomal subunit protein uL15 (148 aa).

Positions 1 to 30 (MTHSKRNTRKLRGHVSHGHGRVGKHRKHPG) are enriched in basic residues. The segment at 1 to 38 (MTHSKRNTRKLRGHVSHGHGRVGKHRKHPGGRGMAGPE) is disordered.

The protein belongs to the universal ribosomal protein uL15 family.

The polypeptide is Large ribosomal subunit protein uL15 (RPL27A) (Euplotes crassus).